We begin with the raw amino-acid sequence, 192 residues long: Pyridoxal 5'-phosphate synthase subunit PdxT (192 aa).

Gly-46–Ser-48 provides a ligand contact to L-glutamine. The active-site Nucleophile is the Cys-77. Residues Arg-103 and Ile-131–Arg-132 contribute to the L-glutamine site. Residues His-167 and Glu-169 each act as charge relay system in the active site.

The protein belongs to the glutaminase PdxT/SNO family. In the presence of PdxS, forms a dodecamer of heterodimers. Only shows activity in the heterodimer.

It carries out the reaction aldehydo-D-ribose 5-phosphate + D-glyceraldehyde 3-phosphate + L-glutamine = pyridoxal 5'-phosphate + L-glutamate + phosphate + 3 H2O + H(+). It catalyses the reaction L-glutamine + H2O = L-glutamate + NH4(+). It functions in the pathway cofactor biosynthesis; pyridoxal 5'-phosphate biosynthesis. Its function is as follows. Catalyzes the hydrolysis of glutamine to glutamate and ammonia as part of the biosynthesis of pyridoxal 5'-phosphate. The resulting ammonia molecule is channeled to the active site of PdxS. The sequence is that of Pyridoxal 5'-phosphate synthase subunit PdxT from Exiguobacterium sibiricum (strain DSM 17290 / CCUG 55495 / CIP 109462 / JCM 13490 / 255-15).